Reading from the N-terminus, the 837-residue chain is Espin (837 aa).

ANK repeat units follow at residues 1–31 (MALE…GPSL), 35–66 (LDAL…AVSR), 69–99 (NGAT…RVQE), 103–132 (SGAT…ANSA), 137–167 (TGAL…GVNA), 171–201 (NGAT…DPHL), 205–235 (DGMT…SFEQ), 238–267 (DGAT…EISQ), and 270–299 (WGGT…GLDV). Phosphoserine occurs at positions 337 and 341. A compositionally biased stretch (basic and acidic residues) spans 339–348 (DPSMDLEAKQ). 4 disordered regions span residues 339 to 459 (DPSM…VGLH), 477 to 712 (DSLK…PATL), 745 to 767 (KLQQ…EARL), and 785 to 816 (EREQ…TLGY). The segment covering 351-364 (SGMSSPNTTMSVQP) has biased composition (polar residues). Positions 376 to 395 (LSNYDSCSSSHSSSKGQRST) are enriched in low complexity. Ser400 and Ser401 each carry phosphoserine. Residues 423-455 (SLPPPPPPSFPPPPPPGTQLPPPPPGYPAPNPP) are compositionally biased toward pro residues. Ser497, Ser504, and Ser531 each carry phosphoserine. Positions 581–604 (LPPPPPPPPLPEALSSPPPAPPLP) are enriched in pro residues. Low complexity predominate over residues 617–626 (SSSSTGSTKS). 2 stretches are compositionally biased toward polar residues: residues 627 to 636 (FNMMSPTGDN) and 651 to 662 (PTPQSKGLTTVF). The residue at position 631 (Ser631) is a Phosphoserine. The region spanning 635 to 652 (DNSELLAEIKAGKSLKPT) is the WH2 domain. Residues 663–673 (SGSGQPASQPE) are compositionally biased toward low complexity. Phosphoserine is present on residues Ser670, Ser674, and Ser680. Residues 738 to 814 (KRQVMVRKLQ…KEQSEKLRTL (77 aa)) adopt a coiled-coil conformation.

As to quaternary structure, monomer. Interacts with PFN2. Binds F-actin in a Ca(2+)-resistant fashion. Interacts (via N-terminal) with BAIAP2 (via SH3-domain). Interacts with MYO3A (via C-terminus). Interacts with MYO3B (via C-terminus). As to expression, expressed at high concentration in the microvillar parallel actin bundle (PAB) of hair cells stereocilia in the cochlea and vestibular system. Detected also at high levels of a number of other sensory cell types, including taste receptor cells, solitary chemoreceptor cells, vomeronasal sensory neurons and Merkel cells. Isoform 1 is detected in testis. Isoforms 2 is detected in small intestine and kidney (at protein level). Isoforms 3, 4, 6 and 8 are expressed in Purkinje cells dendritic spines.

The protein localises to the cytoplasm. Its subcellular location is the cytoskeleton. The protein resides in the cell projection. It is found in the stereocilium. It localises to the microvillus. The protein localises to the cell junction. Its subcellular location is the dendritic spine. Multifunctional actin-bundling protein. Plays a major role in regulating the organization, dimension, dynamics and signaling capacities of the actin filament-rich microvilli in the mechanosensory and chemosensory cells. Required for the assembly and stabilization of the stereociliary parallel actin bundles. Plays a crucial role in the formation and maintenance of inner ear hair cell stereocilia. Involved in the elongation of actin in stereocilia. In extrastriolar hair cells, required for targeting MYO3B to stereocilia tips, and for regulation of stereocilia diameter and staircase formation. In Rattus norvegicus (Rat), this protein is Espin (Espn).